A 102-amino-acid chain; its full sequence is Noncompact myelin-associated protein (102 aa).

Over 1–30 (MTTATPLGDTTFFSLNMTTRGEDFLYKSSG) the chain is Extracellular. The chain crosses the membrane as a helical span at residues 31–51 (AIVAAVVVVVIIIFTVVLILL). Residues 52-102 (KMYNRKMRTRRELEPKGPKPTAPSAVGPNSNGSQHPATVTFSPVDVQVETR) lie on the Cytoplasmic side of the membrane. The interval 60–102 (TRRELEPKGPKPTAPSAVGPNSNGSQHPATVTFSPVDVQVETR) is disordered. Over residues 78–92 (GPNSNGSQHPATVTF) the composition is skewed to polar residues.

Post-translationally, glycosylated.

It is found in the cell membrane. Its function is as follows. Plays a role in myelin formation. The sequence is that of Noncompact myelin-associated protein (NCMAP) from Homo sapiens (Human).